We begin with the raw amino-acid sequence, 184 residues long: Cell division protein ZapC (184 aa).

The protein belongs to the ZapC family. As to quaternary structure, interacts directly with FtsZ.

It is found in the cytoplasm. Functionally, contributes to the efficiency of the cell division process by stabilizing the polymeric form of the cell division protein FtsZ. Acts by promoting interactions between FtsZ protofilaments and suppressing the GTPase activity of FtsZ. The chain is Cell division protein ZapC from Idiomarina loihiensis (strain ATCC BAA-735 / DSM 15497 / L2-TR).